A 143-amino-acid chain; its full sequence is Nucleoside diphosphate kinase (143 aa).

Lys-11, Phe-59, Arg-87, Thr-93, Arg-104, and Asn-114 together coordinate ATP. His-117 (pros-phosphohistidine intermediate) is an active-site residue.

The protein belongs to the NDK family. As to quaternary structure, homotetramer. Mg(2+) serves as cofactor.

Its subcellular location is the cytoplasm. The catalysed reaction is a 2'-deoxyribonucleoside 5'-diphosphate + ATP = a 2'-deoxyribonucleoside 5'-triphosphate + ADP. The enzyme catalyses a ribonucleoside 5'-diphosphate + ATP = a ribonucleoside 5'-triphosphate + ADP. Functionally, major role in the synthesis of nucleoside triphosphates other than ATP. The ATP gamma phosphate is transferred to the NDP beta phosphate via a ping-pong mechanism, using a phosphorylated active-site intermediate. This Azotobacter vinelandii (strain DJ / ATCC BAA-1303) protein is Nucleoside diphosphate kinase.